The chain runs to 147 residues: D-aminoacyl-tRNA deacylase (147 aa).

Positions 136–137 match the Gly-cisPro motif, important for rejection of L-amino acids motif; it reads GP.

This sequence belongs to the DTD family. As to quaternary structure, homodimer.

The protein localises to the cytoplasm. It catalyses the reaction glycyl-tRNA(Ala) + H2O = tRNA(Ala) + glycine + H(+). It carries out the reaction a D-aminoacyl-tRNA + H2O = a tRNA + a D-alpha-amino acid + H(+). Its function is as follows. An aminoacyl-tRNA editing enzyme that deacylates mischarged D-aminoacyl-tRNAs. Also deacylates mischarged glycyl-tRNA(Ala), protecting cells against glycine mischarging by AlaRS. Acts via tRNA-based rather than protein-based catalysis; rejects L-amino acids rather than detecting D-amino acids in the active site. By recycling D-aminoacyl-tRNA to D-amino acids and free tRNA molecules, this enzyme counteracts the toxicity associated with the formation of D-aminoacyl-tRNA entities in vivo and helps enforce protein L-homochirality. The sequence is that of D-aminoacyl-tRNA deacylase from Streptococcus dysgalactiae subsp. equisimilis (Streptococcus equisimilis).